A 101-amino-acid polypeptide reads, in one-letter code: Iron-sulfur cluster assembly protein CyaY (101 aa).

The protein belongs to the frataxin family.

Functionally, involved in iron-sulfur (Fe-S) cluster assembly. May act as a regulator of Fe-S biogenesis. The protein is Iron-sulfur cluster assembly protein CyaY of Haemophilus influenzae (strain 86-028NP).